The primary structure comprises 115 residues: Large ribosomal subunit protein bL35m (115 aa).

The protein belongs to the bacterial ribosomal protein bL35 family.

The protein resides in the mitochondrion. This is Large ribosomal subunit protein bL35m from Saccharomyces cerevisiae (strain YJM789) (Baker's yeast).